A 353-amino-acid chain; its full sequence is Photosystem II protein D1 (353 aa).

Residue threonine 2 is modified to N-acetylthreonine. The residue at position 2 (threonine 2) is a Phosphothreonine. The next 3 helical transmembrane spans lie at 29 to 46 (YIGWFGVLMIPTLLTATS), 118 to 133 (HFLLGVACYMGREWEL), and 142 to 156 (WIAVAYSAPVAAATA). Residue histidine 118 coordinates chlorophyll a. Tyrosine 126 is a binding site for pheophytin a. The [CaMn4O5] cluster site is built by aspartate 170 and glutamate 189. The chain crosses the membrane as a helical span at residues 197–218 (FHMLGVAGVFGGSLFSAMHGSL). Residue histidine 198 coordinates chlorophyll a. A quinone-binding positions include histidine 215 and 264 to 265 (SF). Residue histidine 215 participates in Fe cation binding. A Fe cation-binding site is contributed by histidine 272. The helical transmembrane segment at 274–288 (FLAAWPVVGIWFTAL) threads the bilayer. [CaMn4O5] cluster contacts are provided by histidine 332, glutamate 333, aspartate 342, and alanine 344. Positions 345 to 353 (SVELDSIDG) are excised as a propeptide.

This sequence belongs to the reaction center PufL/M/PsbA/D family. In terms of assembly, PSII is composed of 1 copy each of membrane proteins PsbA, PsbB, PsbC, PsbD, PsbE, PsbF, PsbH, PsbI, PsbJ, PsbK, PsbL, PsbM, PsbT, PsbX, PsbY, PsbZ, Psb30/Ycf12, at least 3 peripheral proteins of the oxygen-evolving complex and a large number of cofactors. It forms dimeric complexes. Requires The D1/D2 heterodimer binds P680, chlorophylls that are the primary electron donor of PSII, and subsequent electron acceptors. It shares a non-heme iron and each subunit binds pheophytin, quinone, additional chlorophylls, carotenoids and lipids. D1 provides most of the ligands for the Mn4-Ca-O5 cluster of the oxygen-evolving complex (OEC). There is also a Cl(-1) ion associated with D1 and D2, which is required for oxygen evolution. The PSII complex binds additional chlorophylls, carotenoids and specific lipids. as cofactor. Post-translationally, tyr-161 forms a radical intermediate that is referred to as redox-active TyrZ, YZ or Y-Z. C-terminally processed by CTPA; processing is essential to allow assembly of the oxygen-evolving complex and thus photosynthetic growth.

The protein resides in the plastid. It is found in the chloroplast thylakoid membrane. It catalyses the reaction 2 a plastoquinone + 4 hnu + 2 H2O = 2 a plastoquinol + O2. Photosystem II (PSII) is a light-driven water:plastoquinone oxidoreductase that uses light energy to abstract electrons from H(2)O, generating O(2) and a proton gradient subsequently used for ATP formation. It consists of a core antenna complex that captures photons, and an electron transfer chain that converts photonic excitation into a charge separation. The D1/D2 (PsbA/PsbD) reaction center heterodimer binds P680, the primary electron donor of PSII as well as several subsequent electron acceptors. The protein is Photosystem II protein D1 of Gnetum parvifolium (Small-leaved jointfir).